A 1049-amino-acid polypeptide reads, in one-letter code: FERM, ARHGEF and pleckstrin domain-containing protein 1 (1049 aa).

Residues 1 to 37 (MGEIEQKPTPASRLGAPENSGISTLERGQKPPPTPSG) are disordered. Ser-20 and Ser-23 each carry phosphoserine. Residue Thr-24 is modified to Phosphothreonine. Positions 40–320 (MTVKIQMLDD…EHHAFFRLFE (281 aa)) constitute an FERM domain. Residues Ser-340, Ser-373, Ser-389, Ser-403, Ser-427, Ser-433, and Ser-437 each carry the phosphoserine modification. The tract at residues 361–537 (FERKHSKIHS…TDDEEEGRRK (177 aa)) is disordered. Composition is skewed to polar residues over residues 371 to 395 (TRSL…SASL) and 402 to 412 (ESPSAQSCQQA). Residues 435 to 448 (SGSKAADGTAAAAP) are compositionally biased toward low complexity. 2 stretches are compositionally biased toward polar residues: residues 473–492 (STGS…NSQG) and 499–514 (VTLS…QASP). Ser-513 and Ser-517 each carry phosphoserine. Residues 543-734 (KAYYIAKEVS…TEMVAQLHGT (192 aa)) enclose the DH domain. A PH 1 domain is found at 763–860 (EFIRLGSLSK…WLEDIQMAID (98 aa)). Ser-837, Ser-876, and Ser-882 each carry phosphoserine. The interval 866 to 908 (NGPTPELLASSPPDNKSPDEATAADQESEDDLSASRTSLERQA) is disordered. A Phosphothreonine modification is found at Thr-887. Ser-893, Ser-900, and Ser-903 each carry phosphoserine. Residues 936–1033 (ENQLSGNLLR…WMEVIRSATS (98 aa)) enclose the PH 2 domain.

As to quaternary structure, interacts with CADM1. Interacts with RAC1. As to expression, detected in forbrain (at protein level).

The protein localises to the cell membrane. Its subcellular location is the synapse. It localises to the synaptosome. It is found in the cytoplasm. The protein resides in the cytosol. The protein localises to the cell projection. Its subcellular location is the filopodium. It localises to the dendrite. It is found in the dendritic spine. Its function is as follows. May play a role in semaphorin signaling. Functions as a guanine nucleotide exchange factor for RAC1. Plays a role in the assembly and disassembly of dendritic filopodia, the formation of dendritic spines, regulation of dendrite length and ultimately the formation of synapses. The protein is FERM, ARHGEF and pleckstrin domain-containing protein 1 (Farp1) of Rattus norvegicus (Rat).